The following is a 759-amino-acid chain: Nucleolar RNA helicase 2-A (759 aa).

The tract at residues 1–154 is disordered; sequence MPVKVYAEEM…KKRKTDTTEI (154 aa). Over residues 77-86 the composition is skewed to acidic residues; sequence ETAEECDGEQ. The Q motif motif lies at 179 to 207; it reads GDFSKFPLSKETIKNLQAKGVSYLFPIQS. Residues 210-389 enclose the Helicase ATP-binding domain; sequence FHTAYSGKDV…KKYMRKQFEK (180 aa). 223–230 is an ATP binding site; sequence ARTGTGKT. Residues 332–335 carry the DEAD box motif; the sequence is DEVD. The Helicase C-terminal domain maps to 422–566; it reads DLVQVYSGSH…VGVPSLLNVA (145 aa). The tract at residues 709 to 759 is disordered; it reads QESERNFDGPRNRGFGGRGRRPFDRRNNSRNSNRGGGGRGRNRNGGFRRGR. Basic and acidic residues predominate over residues 710–719; the sequence is ESERNFDGPR. Positions 748–759 are enriched in basic residues; the sequence is GRNRNGGFRRGR.

This sequence belongs to the DEAD box helicase family. DDX21/DDX50 subfamily. Widely expressed. Expressed at higher level in stomach. Expressed at higher level compared to ddx21-b.

Its subcellular location is the nucleus. It localises to the nucleolus. It is found in the nucleoplasm. The protein localises to the cytoplasm. The protein resides in the cytosol. Its subcellular location is the mitochondrion. It carries out the reaction ATP + H2O = ADP + phosphate + H(+). Functionally, RNA helicase that acts as a sensor of the transcriptional status of both RNA polymerase (Pol) I and II: promotes ribosomal RNA (rRNA) processing and transcription from polymerase II (Pol II). Binds various RNAs, such as rRNAs, snoRNAs, 7SK and, at lower extent, mRNAs. In the nucleolus, localizes to rDNA locus, where it directly binds rRNAs and snoRNAs, and promotes rRNA transcription, processing and modification. Required for rRNA 2'-O-methylation, possibly by promoting the recruitment of late-acting snoRNAs SNORD56 and SNORD58 with pre-ribosomal complexes. In the nucleoplasm, binds 7SK RNA and is recruited to the promoters of Pol II-transcribed genes: acts by facilitating the release of P-TEFb from inhibitory 7SK snRNP in a manner that is dependent on its helicase activity, thereby promoting transcription of its target genes. Required to prevent R-loop-associated DNA damage and transcription-associated genomic instability. This chain is Nucleolar RNA helicase 2-A (ddx21-a), found in Xenopus laevis (African clawed frog).